We begin with the raw amino-acid sequence, 339 residues long: Transmembrane protein 120B (339 aa).

The stretch at Met-1–His-67 forms a coiled coil. 6 consecutive transmembrane segments (helical) span residues Gly-102–Ala-124, Phe-132–His-152, Val-159–Ile-179, Gly-187–Pro-207, Phe-270–Phe-290, and Gln-302–Leu-322.

It belongs to the TMEM120 family. As to quaternary structure, heterooligomer with TMEM120A. As to expression, expressed in inguinal and subcutaneous white adipose tissue and in brown adipose tissue.

Its subcellular location is the nucleus inner membrane. Its function is as follows. Necessary for efficient adipogenesis. Does not show ion channel activity. The polypeptide is Transmembrane protein 120B (Mus musculus (Mouse)).